The following is a 415-amino-acid chain: Beta-1,4-glucuronyltransferase 1 (415 aa).

The Cytoplasmic segment spans residues methionine 1–arginine 8. The chain crosses the membrane as a helical; Signal-anchor for type II membrane protein span at residues cysteine 9–leucine 36. Over histidine 37–cysteine 415 the chain is Lumenal. N-linked (GlcNAc...) asparagine glycosylation occurs at asparagine 204. Positions 227 and 229 each coordinate Mn(2+). A glycan (N-linked (GlcNAc...) asparagine) is linked at asparagine 300.

The protein belongs to the glycosyltransferase 49 family. As to quaternary structure, interacts with LARGE1 and LARGE2. Mn(2+) serves as cofactor.

It is found in the golgi apparatus membrane. It carries out the reaction 3-O-[beta-D-Xyl-(1-&gt;4)-Rib-ol-P-Rib-ol-P-3-beta-D-GalNAc-(1-&gt;3)-beta-D-GlcNAc-(1-&gt;4)-(O-6-P-alpha-D-Man)]-Thr-[protein] + UDP-alpha-D-glucuronate = 3-O-[beta-D-GlcA-(1-&gt;3)-beta-D-Xyl-(1-&gt;4)-Rib-ol-P-Rib-ol-P-3-beta-D-GalNAc-(1-&gt;3)-beta-D-GlcNAc-(1-&gt;4)-(O-6-P-alpha-D-Man)]-Thr-[protein] + UDP + H(+). It participates in protein modification; protein glycosylation. Functionally, beta-1,4-glucuronyltransferase involved in O-mannosylation of alpha-dystroglycan (DAG1). Transfers a glucuronic acid (GlcA) residue onto a xylose (Xyl) acceptor to produce the glucuronyl-beta-1,4-xylose-beta disaccharide primer, which is further elongated by LARGE1, during synthesis of phosphorylated O-mannosyl glycan. Phosphorylated O-mannosyl glycan is a carbohydrate structure present in alpha-dystroglycan (DAG1), which is required for binding laminin G-like domain-containing extracellular proteins with high affinity. Required for axon guidance; via its function in O-mannosylation of alpha-dystroglycan (DAG1). The protein is Beta-1,4-glucuronyltransferase 1 of Mus musculus (Mouse).